Here is a 305-residue protein sequence, read N- to C-terminus: UDP-N-acetylenolpyruvoylglucosamine reductase 2 (305 aa).

The FAD-binding PCMH-type domain maps to 33–197 (VGGKADVFVA…LEARFELEEG (165 aa)). R176 is a catalytic residue. Catalysis depends on S226, which acts as the Proton donor. E296 is a catalytic residue.

This sequence belongs to the MurB family. FAD is required as a cofactor.

The protein localises to the cytoplasm. It carries out the reaction UDP-N-acetyl-alpha-D-muramate + NADP(+) = UDP-N-acetyl-3-O-(1-carboxyvinyl)-alpha-D-glucosamine + NADPH + H(+). Its pathway is cell wall biogenesis; peptidoglycan biosynthesis. In terms of biological role, cell wall formation. This Bacillus anthracis protein is UDP-N-acetylenolpyruvoylglucosamine reductase 2 (murB2).